The following is a 489-amino-acid chain: FAD-containing monooxygenase EthA (489 aa).

FAD contacts are provided by residues S15, E36, 44–47 (TWDL), D56, and V104. An NADP(+)-binding site is contributed by 54–56 (RSD). NADP(+) is bound by residues 183-189 (SGATAVT) and 207-208 (RS).

It belongs to the FAD-binding monooxygenase family. It depends on FAD as a cofactor.

The protein resides in the cell membrane. The catalysed reaction is ethionamide + NADPH + O2 + H(+) = ethionamide S-oxide + NADP(+) + H2O. Its function is as follows. Monooxygenase able to convert a wide range of ketones to the corresponding esters or lactones via a Baeyer-Villiger oxidation reaction. Can act on long-chain aliphatic ketones (2-hexanone to 2-dodecanone) and on aromatic ketones (phenylacetone and benzylacetone). Is also able to catalyze enantioselective sulfoxidation of methyl-p-tolylsulfide. In vivo, likely functions as a BVMO, but the exact nature of the physiological substrate(s) remains to be established. In terms of biological role, is responsible for the activation of several thiocarbamide-containing pro-drugs, such as ethionamide (ETH), isoxyl (ISO) and thiacetazone (TAC), into reactive species. The protein is FAD-containing monooxygenase EthA (ethA) of Mycobacterium bovis (strain ATCC BAA-935 / AF2122/97).